The primary structure comprises 342 residues: MKALSKLKAEVGIWMTDVPAPELGHNDLLIKIRKTAICGTDMHIYNWDEWAQKTIPVPMVVGHEYVGEVVAVGQEVRGFAVGDRVSGEGHITCGHCRNCRAGRTHLCRNTIGVGVNRPGSFAEYLVIPAFNAFKLPDNIPDELAAIFDPFGNAVHTALSFDLVGEDVLITGAGPIGIMAAAVCRHVGARHVVITDVNEYRLELARKMGATRAVNVSKEKLADVMSALGMTEGFDVGLEMSGVPSAFQDMIDKMNHGGKIAMLGIPPSTMAIDWNKVIFKGLFIKGIYGREMFETWYKMASLIQSGLDLTPIITHHFHIDDFQQGFEAMGSGKSGKVILSWDK.

Position 38 (cysteine 38) interacts with Zn(2+). Residues threonine 40 and histidine 43 each act as charge relay system in the active site. Zn(2+) is bound by residues histidine 63, glutamate 64, cysteine 93, cysteine 96, cysteine 99, and cysteine 107. NAD(+) contacts are provided by residues isoleucine 175, aspartate 195, arginine 200, 262–264 (LGI), and 286–287 (IY).

It belongs to the zinc-containing alcohol dehydrogenase family. Homotetramer. The cofactor is Zn(2+).

Its subcellular location is the cytoplasm. It catalyses the reaction L-threonine + NAD(+) = (2S)-2-amino-3-oxobutanoate + NADH + H(+). Its pathway is amino-acid degradation; L-threonine degradation via oxydo-reductase pathway; glycine from L-threonine: step 1/2. Functionally, catalyzes the NAD(+)-dependent oxidation of L-threonine to 2-amino-3-ketobutyrate. This Aeromonas salmonicida (strain A449) protein is L-threonine 3-dehydrogenase.